The chain runs to 510 residues: NAD(P)H-quinone oxidoreductase subunit 2 B, chloroplastic (510 aa).

A run of 13 helical transmembrane segments spans residues 24–44 (LLFF…GLIL), 57–77 (IPWL…ALLF), 99–119 (IFQF…VEYI), 124–144 (MAIT…MFLC), 149–169 (LITI…LSGY), 183–203 (YLLM…WLYG), 227–247 (PGIS…LSPA), 295–315 (WHLL…LIAI), 323–343 (MLAY…IVGD), 354–374 (YMLF…LFGL), 395–415 (ALSL…AGFF), 418–438 (LYLF…IGLL), and 484–504 (MIVC…IIAI).

It belongs to the complex I subunit 2 family. In terms of assembly, NDH is composed of at least 16 different subunits, 5 of which are encoded in the nucleus.

It localises to the plastid. The protein resides in the chloroplast thylakoid membrane. It catalyses the reaction a plastoquinone + NADH + (n+1) H(+)(in) = a plastoquinol + NAD(+) + n H(+)(out). The catalysed reaction is a plastoquinone + NADPH + (n+1) H(+)(in) = a plastoquinol + NADP(+) + n H(+)(out). In terms of biological role, NDH shuttles electrons from NAD(P)H:plastoquinone, via FMN and iron-sulfur (Fe-S) centers, to quinones in the photosynthetic chain and possibly in a chloroplast respiratory chain. The immediate electron acceptor for the enzyme in this species is believed to be plastoquinone. Couples the redox reaction to proton translocation, and thus conserves the redox energy in a proton gradient. The sequence is that of NAD(P)H-quinone oxidoreductase subunit 2 B, chloroplastic from Guizotia abyssinica (Niger).